The sequence spans 148 residues: Large ribosomal subunit protein bL9 (148 aa).

Belongs to the bacterial ribosomal protein bL9 family.

Binds to the 23S rRNA. The polypeptide is Large ribosomal subunit protein bL9 (Geobacter metallireducens (strain ATCC 53774 / DSM 7210 / GS-15)).